The following is a 105-amino-acid chain: Putative toxin MazF8 (105 aa).

In terms of assembly, forms a complex with cognate antitoxin MazE8.

In terms of biological role, putative toxic component of a type II toxin-antitoxin (TA) system. Acts as an endoribonuclease. Neutralized by coexpression with cognate antitoxin MazE8. The protein is Putative toxin MazF8 (mazF8) of Mycobacterium tuberculosis (strain CDC 1551 / Oshkosh).